The chain runs to 89 residues: Small ribosomal subunit protein uS15 (89 aa).

This sequence belongs to the universal ribosomal protein uS15 family. As to quaternary structure, part of the 30S ribosomal subunit. Forms a bridge to the 50S subunit in the 70S ribosome, contacting the 23S rRNA.

Its function is as follows. One of the primary rRNA binding proteins, it binds directly to 16S rRNA where it helps nucleate assembly of the platform of the 30S subunit by binding and bridging several RNA helices of the 16S rRNA. Forms an intersubunit bridge (bridge B4) with the 23S rRNA of the 50S subunit in the ribosome. In Acaryochloris marina (strain MBIC 11017), this protein is Small ribosomal subunit protein uS15.